A 304-amino-acid chain; its full sequence is Acetylglutamate kinase (304 aa).

Residues 77 to 78 (GG), arginine 99, and asparagine 193 each bind substrate.

Belongs to the acetylglutamate kinase family. ArgB subfamily.

It is found in the cytoplasm. It carries out the reaction N-acetyl-L-glutamate + ATP = N-acetyl-L-glutamyl 5-phosphate + ADP. Its pathway is amino-acid biosynthesis; L-arginine biosynthesis; N(2)-acetyl-L-ornithine from L-glutamate: step 2/4. Its function is as follows. Catalyzes the ATP-dependent phosphorylation of N-acetyl-L-glutamate. This is Acetylglutamate kinase from Chlorobium limicola (strain DSM 245 / NBRC 103803 / 6330).